Reading from the N-terminus, the 158-residue chain is Cysteine-rich venom protein VAR7 (158 aa).

Positions 1–22 (MILLKLYLTLAAILCQSRGTTS) are cleaved as a signal peptide. Residues 41–158 (NKHNDLRRTV…MGCAINLCPN (118 aa)) enclose the SCP domain. An intrachain disulfide couples Cys-77 to Cys-156.

It belongs to the CRISP family. In terms of processing, contains 8 disulfide bonds. Expressed by the venom gland.

Its subcellular location is the secreted. Functionally, blocks ryanodine receptors, and potassium channels. This chain is Cysteine-rich venom protein VAR7, found in Varanus acanthurus (Ridge-tailed monitor).